The primary structure comprises 108 residues: Replication restart protein PriB (108 aa).

The SSB domain maps to 8 to 108; it reads VDNRFSLIGK…LHAEQIEFIE (101 aa).

Belongs to the PriB family. As to quaternary structure, homodimer. Interacts with PriA and DnaT. Component of the replication restart primosome. Primosome assembly occurs via a 'hand-off' mechanism. PriA binds to replication forks, subsequently PriB then DnaT bind; DnaT then displaces ssDNA to generate the helicase loading substrate.

In terms of biological role, involved in the restart of stalled replication forks, which reloads the replicative helicase on sites other than the origin of replication; the PriA-PriB pathway is the major replication restart pathway. During primosome assembly it facilitates complex formation between PriA and DnaT on DNA; stabilizes PriA on DNA. Stimulates the DNA unwinding activity of PriA helicase. The chain is Replication restart protein PriB from Histophilus somni (strain 129Pt) (Haemophilus somnus).